Consider the following 75-residue polypeptide: MLPTNINISHLKTNSIGTGSSLTFGSAELRNRCSAIKRNNGFGEQNADGIVMVIPIESIDDRDVSDALSMKINHQ.

This is an uncharacterized protein from Bacillus subtilis (strain 168).